The following is a 124-amino-acid chain: Small ribosomal subunit protein uS13 (124 aa).

The interval 98-124 (VRGQRTRCNARTRKGPRKTVGAKRKEK) is disordered.

The protein belongs to the universal ribosomal protein uS13 family. Part of the 30S ribosomal subunit. Forms a loose heterodimer with protein S19. Forms two bridges to the 50S subunit in the 70S ribosome.

Functionally, located at the top of the head of the 30S subunit, it contacts several helices of the 16S rRNA. In the 70S ribosome it contacts the 23S rRNA (bridge B1a) and protein L5 of the 50S subunit (bridge B1b), connecting the 2 subunits; these bridges are implicated in subunit movement. Contacts the tRNAs in the A and P-sites. In Dictyoglomus turgidum (strain DSM 6724 / Z-1310), this protein is Small ribosomal subunit protein uS13.